The sequence spans 217 residues: tRNA 5-hydroxyuridine methyltransferase (217 aa).

S-adenosyl-L-methionine is bound by residues Met-38, Ser-68, Glu-85, 113–114, and Asp-133; that span reads DA. Asp-133, Asp-159, and Asn-160 together coordinate Mg(2+).

Belongs to the class I-like SAM-binding methyltransferase superfamily. Cation-dependent O-methyltransferase family. As to quaternary structure, homodimer.

It catalyses the reaction 5-hydroxyuridine(34) in tRNA + S-adenosyl-L-methionine = 5-methoxyuridine(34) in tRNA + S-adenosyl-L-homocysteine + H(+). In terms of biological role, catalyzes the methylation of 5-hydroxyuridine (ho5U) to form 5-methoxyuridine (mo5U) at position 34 in tRNAs. This Bacillus subtilis (strain 168) protein is tRNA 5-hydroxyuridine methyltransferase.